The chain runs to 127 residues: Calcitonin receptor-stimulating peptide 1 (127 aa).

An N-terminal signal peptide occupies residues 1-25; that stretch reads MGFWKFSPFLVLGILALYQVGFLQA. The propeptide occupies 26–79; it reads APFRSALENPPDSGVRNEEELRLLLAAVMKDYMQMKTHELEQEQETEGSRVAVQ. The cysteines at positions 83 and 88 are disulfide-linked.

It belongs to the calcitonin family.

The protein resides in the secreted. Stimulates cAMP production in porcine kidney cell line LLC-PK1 via the calcitonin receptor (CT) but not via the CT-like (CL) receptor. The sequence is that of Calcitonin receptor-stimulating peptide 1 (CRSP1) from Canis lupus familiaris (Dog).